Here is a 729-residue protein sequence, read N- to C-terminus: Monosaccharide-sensing protein 2 (729 aa).

Transmembrane regions (helical) follow at residues 1 to 21 (MSGAVLVAIAAAVGNLLQGWD), 47 to 67 (LIVAMSLIGATLITTCSGGVA), 81 to 101 (ILYFVGSLVMLWSPNVYVLLL), 104 to 124 (LLDGFGVGLVVTLVPIYISET), 139 to 159 (FTGSGGMFLSYCMVFGMSLMP), and 165 to 185 (LMLGVLFIPSLVFFFLTVFFL). A compositionally biased stretch (acidic residues) spans 347–363 (VGEGEDYPSDHGDDSED). Disordered regions lie at residues 347 to 367 (VGEGEDYPSDHGDDSEDDLHS) and 423 to 442 (EREDESGQKEEGFPGSRRGS). A compositionally biased stretch (basic and acidic residues) spans 423-434 (EREDESGQKEEG). A phosphoserine mark is found at serine 438 and glycine 448. 6 helical membrane passes run 507–527 (ALVVGVGLQILQQFSGINGVL), 553–573 (ASLLISALTTFVMLPAIAVAM), 585–605 (LLTTIPILIASLLVLVISNLV), 610–630 (IVHAVLSTVSVVLYFCFFVMG), 650–670 (ICIAICALTFWICDIIVTYSL), and 679–699 (LAGVFGMYAIVCCISWVFVFI).

It belongs to the major facilitator superfamily. Sugar transporter (TC 2.A.1.1) family. As to expression, mostly expressed in roots and stems, and, to a lower extent, in juvenile and adult leaves, and in flower tissues.

Its subcellular location is the vacuole membrane. It carries out the reaction D-glucose(out) + H(+)(in) = D-glucose(in) + H(+)(out). The enzyme catalyses sucrose(out) + H(+)(in) = sucrose(in) + H(+)(out). Functionally, sugar proton-coupled antiporter which contributes to vacuolar sugar import (e.g. monosaccharides including glucose, sucrose and fructose), particularly during stress responses (e.g. in response to cold). The sequence is that of Monosaccharide-sensing protein 2 from Arabidopsis thaliana (Mouse-ear cress).